Consider the following 39-residue polypeptide: Cytochrome b6-f complex subunit 5 (39 aa).

Residues 5–25 (LLCGIVLGLVPITLLGLFVSA) traverse the membrane as a helical segment.

This sequence belongs to the PetG family. In terms of assembly, the 4 large subunits of the cytochrome b6-f complex are cytochrome b6, subunit IV (17 kDa polypeptide, PetD), cytochrome f and the Rieske protein, while the 4 small subunits are PetG, PetL, PetM and PetN. The complex functions as a dimer.

The protein localises to the cellular thylakoid membrane. Component of the cytochrome b6-f complex, which mediates electron transfer between photosystem II (PSII) and photosystem I (PSI), cyclic electron flow around PSI, and state transitions. PetG is required for either the stability or assembly of the cytochrome b6-f complex. The sequence is that of Cytochrome b6-f complex subunit 5 from Prochlorococcus marinus (strain MIT 9515).